The chain runs to 276 residues: Dermonecrotic toxin LdSicTox-alphaIB2 (276 aa).

His-5 is an active-site residue. 2 residues coordinate Mg(2+): Glu-25 and Asp-27. His-41 (nucleophile) is an active-site residue. Disulfide bonds link Cys-45/Cys-51 and Cys-47/Cys-190. A Mg(2+)-binding site is contributed by Asp-85. Asn-253 is a glycosylation site (N-linked (GlcNAc...) asparagine).

This sequence belongs to the arthropod phospholipase D family. Class II subfamily. Mg(2+) serves as cofactor. As to expression, expressed by the venom gland.

The protein localises to the secreted. The catalysed reaction is an N-(acyl)-sphingosylphosphocholine = an N-(acyl)-sphingosyl-1,3-cyclic phosphate + choline. It carries out the reaction an N-(acyl)-sphingosylphosphoethanolamine = an N-(acyl)-sphingosyl-1,3-cyclic phosphate + ethanolamine. It catalyses the reaction a 1-acyl-sn-glycero-3-phosphocholine = a 1-acyl-sn-glycero-2,3-cyclic phosphate + choline. The enzyme catalyses a 1-acyl-sn-glycero-3-phosphoethanolamine = a 1-acyl-sn-glycero-2,3-cyclic phosphate + ethanolamine. Its function is as follows. Dermonecrotic toxins cleave the phosphodiester linkage between the phosphate and headgroup of certain phospholipids (sphingolipid and lysolipid substrates), forming an alcohol (often choline) and a cyclic phosphate. This toxin acts on sphingomyelin (SM). It may also act on ceramide phosphoethanolamine (CPE), lysophosphatidylcholine (LPC) and lysophosphatidylethanolamine (LPE), but not on lysophosphatidylserine (LPS), and lysophosphatidylglycerol (LPG). It acts by transphosphatidylation, releasing exclusively cyclic phosphate products as second products. Induces dermonecrosis, hemolysis, increased vascular permeability, edema, inflammatory response, and platelet aggregation. This Loxosceles deserta (Desert recluse spider) protein is Dermonecrotic toxin LdSicTox-alphaIB2.